The following is a 382-amino-acid chain: uncharacterized protein (382 aa).

Transmembrane regions (helical) follow at residues 14-34 (GLLL…LWLA), 45-65 (VVSS…GYVI), 79-99 (FIFA…SWLA), 102-122 (FVAG…LMCS), 131-151 (LLAA…LLVS), 157-177 (LMSV…PLLF), 204-224 (LGVN…GLMP), 235-255 (ASIG…QWPI), 270-290 (VQVF…AMAP), 291-311 (ALFI…AWAC), 325-345 (ALLL…AMLM), and 348-368 (FSDN…LLML).

The protein belongs to the major facilitator superfamily. YcaD (TC 2.A.1.26) family.

The protein localises to the cell inner membrane. This is an uncharacterized protein from Escherichia coli O45:K1 (strain S88 / ExPEC).